Consider the following 141-residue polypeptide: Hemoglobin subunit alpha-A (141 aa).

The Globin domain occupies 1-141 (VLSAADKTNV…VGTVLTAKYR (141 aa)). O2 is bound at residue His58. His87 contributes to the heme b binding site.

This sequence belongs to the globin family. As to quaternary structure, heterotetramer of two alpha chains and two beta chains. As to expression, red blood cells.

Its function is as follows. Involved in oxygen transport from the lung to the various peripheral tissues. The protein is Hemoglobin subunit alpha-A (HBAA) of Branta canadensis (Canada goose).